A 362-amino-acid chain; its full sequence is 3-isopropylmalate dehydrogenase (362 aa).

Residue Gly75–Glu88 participates in NAD(+) binding. 4 residues coordinate substrate: Arg96, Arg106, Arg135, and Asp224. Residues Asp224, Asp248, and Asp252 each coordinate Mg(2+). Gly282–Asn294 is a binding site for NAD(+).

Belongs to the isocitrate and isopropylmalate dehydrogenases family. LeuB type 1 subfamily. Homodimer. The cofactor is Mg(2+). Mn(2+) is required as a cofactor.

The protein resides in the cytoplasm. It carries out the reaction (2R,3S)-3-isopropylmalate + NAD(+) = 4-methyl-2-oxopentanoate + CO2 + NADH. Its pathway is amino-acid biosynthesis; L-leucine biosynthesis; L-leucine from 3-methyl-2-oxobutanoate: step 3/4. Functionally, catalyzes the oxidation of 3-carboxy-2-hydroxy-4-methylpentanoate (3-isopropylmalate) to 3-carboxy-4-methyl-2-oxopentanoate. The product decarboxylates to 4-methyl-2 oxopentanoate. In Colwellia psychrerythraea (strain 34H / ATCC BAA-681) (Vibrio psychroerythus), this protein is 3-isopropylmalate dehydrogenase.